A 59-amino-acid polypeptide reads, in one-letter code: UPF0434 protein Rsph17025_2896 (59 aa).

This sequence belongs to the UPF0434 family.

The protein is UPF0434 protein Rsph17025_2896 of Cereibacter sphaeroides (strain ATCC 17025 / ATH 2.4.3) (Rhodobacter sphaeroides).